The primary structure comprises 1936 residues: Potassium channel K1 (1936 aa).

6 helical membrane-spanning segments follow: residues 175 to 195 (IIILYIIMLEFGSMLISYILL), 598 to 618 (VWIIAILIRIILWCIVWLWAA), 643 to 663 (GYIECTFQWCGVLDYLFGLYF), 670 to 690 (YIFSFFSLIDFITTPVSSFIM), 701 to 721 (TYWFLILGPLRFLRLVRAEST), and 734 to 754 (IIIIGIIILSLAILFTFSGIM). The segment at residues 772 to 788 (FVYFGVITMSTVGYGDY) is an intramembrane region (pore-forming). Residues 791 to 811 (VTPAGKCLTMFIIVTCFTFVG) form a helical membrane-spanning segment. The stretch at 1141 to 1185 (DTSSMINYKSKSRVNYKMVKGTKNEFIRNQNYNINSIYYANNDNM) forms a coiled coil.

It localises to the membrane. It carries out the reaction K(+)(in) = K(+)(out). With respect to regulation, partially inhibited by Ba(2+) and quinine. Probably insensitive to tetraethylammonium (TEA). Its function is as follows. Likely a predominant potassium channel in the erythrocytic stages of parasites. Mediates transmembrane potassium transport. Required for the development of oocysts in the mosquito midgut. The polypeptide is Potassium channel K1 (Plasmodium berghei (strain Anka)).